A 309-amino-acid chain; its full sequence is Porphobilinogen deaminase (309 aa).

C241 carries the post-translational modification S-(dipyrrolylmethanemethyl)cysteine.

The protein belongs to the HMBS family. Monomer. The cofactor is dipyrromethane.

The enzyme catalyses 4 porphobilinogen + H2O = hydroxymethylbilane + 4 NH4(+). It participates in porphyrin-containing compound metabolism; protoporphyrin-IX biosynthesis; coproporphyrinogen-III from 5-aminolevulinate: step 2/4. Its function is as follows. Tetrapolymerization of the monopyrrole PBG into the hydroxymethylbilane pre-uroporphyrinogen in several discrete steps. This Bacillus cereus (strain ATCC 10987 / NRS 248) protein is Porphobilinogen deaminase.